The chain runs to 2397 residues: Cell wall alpha-1,3-glucan synthase mok11 (2397 aa).

The segment at 1683 to 1705 (SNQQSFDFKSSESDSFPQKSPSV) is disordered. Over residues 1687-1698 (SFDFKSSESDSF) the composition is skewed to low complexity.

The protein belongs to the glycosyltransferase group 1 family.

It carries out the reaction [(1-&gt;3)-alpha-D-glucosyl](n) + UDP-alpha-D-glucose = [(1-&gt;3)-alpha-D-glucosyl](n+1) + UDP + H(+). This is Cell wall alpha-1,3-glucan synthase mok11 (mok11) from Schizosaccharomyces pombe (strain 972 / ATCC 24843) (Fission yeast).